Here is a 311-residue protein sequence, read N- to C-terminus: MAKLITLGEILIEFNALSPGPLRHVSYFEKHVAGSEANYCVAFIKQGNECGIIAKVGDDEFGYNAIEWLRGQGVDVSHMKIDPSAPTGIFFIQRHYPVPLKSESIYYRKGSAGSKLSPEDVDEEYVKSADLVHSSGITLAISSTAKEAVYKAFEIASNRSFDTNIRLKLWSAEEAKREILKLLSKFHLKFLITDTDDSKIILGESDPDKAAKAFSDYAEIIVMKLGPKGAIVYYDGKKYYSSGYQVPVEDVTGAGDALGGTFLSLYYKGFEMEKALDYAIVASTLNVMIRGDQENLPTTKDIETFLREMKK.

Residues 34 to 35 (GS), 106 to 108 (YYR), and Arg-166 each bind substrate. ATP is bound by residues 164–166 (NIR), 224–229 (KLGPKG), 253–256 (GAGD), and Ser-283. Residues Gly-253 and Asp-256 each coordinate substrate. Asp-256 serves as the catalytic Proton acceptor. A substrate-binding site is contributed by Asp-292.

This sequence belongs to the carbohydrate kinase PfkB family. Homotetramer. Requires a divalent metal cation as cofactor.

It carries out the reaction 2-dehydro-3-deoxy-D-gluconate + ATP = 2-dehydro-3-deoxy-6-phospho-D-gluconate + ADP + H(+). Its pathway is carbohydrate acid metabolism; 2-dehydro-3-deoxy-D-gluconate degradation; D-glyceraldehyde 3-phosphate and pyruvate from 2-dehydro-3-deoxy-D-gluconate: step 1/2. Functionally, involved in the degradation of glucose via the semi-phosphorylative Entner-Doudoroff pathway. Catalyzes the phosphorylation of 2-keto-3-deoxygluconate (KDG) to produce 2-keto-3-deoxy-6-phosphogluconate (KDPG). Can also use GTP, but not ADP or AMP, as a phosphoryl donor and 2-keto-D-gluconate (KG) as a phosphoryl acceptor. This chain is 2-dehydro-3-deoxygluconokinase, found in Sulfurisphaera tokodaii (strain DSM 16993 / JCM 10545 / NBRC 100140 / 7) (Sulfolobus tokodaii).